The sequence spans 629 residues: Protein SPT2 homolog (629 aa).

An important for interaction with DNA region spans residues methionine 1 to serine 522. Residues glutamine 45–lysine 72 are a coiled coil. A compositionally biased stretch (basic and acidic residues) spans valine 53 to phenylalanine 93. 3 disordered regions span residues valine 53–serine 181, lysine 206–tyrosine 533, and glutamate 608–lysine 629. Positions lysine 111–lysine 123 are enriched in polar residues. Over residues glycine 127–serine 144 the composition is skewed to acidic residues. A coiled-coil region spans residues valine 203 to lysine 228. 2 stretches are compositionally biased toward basic and acidic residues: residues lysine 206–arginine 247 and lysine 257–glutamine 277. Polar residues-rich tracts occupy residues serine 278–serine 297, serine 305–alanine 327, serine 335–aspartate 345, valine 353–glycine 364, serine 387–proline 398, asparagine 437–serine 450, and serine 462–isoleucine 490. The segment at glycine 523–lysine 629 is important for interaction with histones. Residues tryptophan 591–lysine 629 are a coiled coil.

Belongs to the SPT2 family. As to quaternary structure, interacts with histones. Interacts with a heterotetrameric complex formed by histone H3 and H4, especially when the histone tetramer is not bound to DNA.

Its subcellular location is the nucleus. It is found in the nucleolus. Functionally, histone chaperone that stabilizes pre-existing histone tetramers and regulates replication-independent histone exchange on chromatin. Required for normal chromatin refolding in the coding region of transcribed genes, and for the suppression of spurious transcription. Binds DNA and histones and promotes nucleosome assembly (in vitro). Facilitates formation of tetrameric histone complexes containing histone H3 and H4. Modulates RNA polymerase 1-mediated transcription. Binds DNA, with a preference for branched DNA species, such as Y-form DNA and Holliday junction DNA. In Danio rerio (Zebrafish), this protein is Protein SPT2 homolog (spty2d1).